The chain runs to 101 residues: Large ribosomal subunit protein uL23 (101 aa).

This sequence belongs to the universal ribosomal protein uL23 family. Part of the 50S ribosomal subunit. Contacts protein L29, and trigger factor when it is bound to the ribosome.

One of the early assembly proteins it binds 23S rRNA. One of the proteins that surrounds the polypeptide exit tunnel on the outside of the ribosome. Forms the main docking site for trigger factor binding to the ribosome. In Rhodococcus jostii (strain RHA1), this protein is Large ribosomal subunit protein uL23.